Reading from the N-terminus, the 72-residue chain is SRY-related protein MG42 (72 aa).

A DNA-binding region (HMG box) is located at residues 1–69 (VKRPMNAFMV…KHMADYPNYK (69 aa)).

The protein localises to the nucleus. This Tarentola mauritanica (Common wall gecko) protein is SRY-related protein MG42.